A 505-amino-acid chain; its full sequence is Deoxyguanosinetriphosphate triphosphohydrolase (505 aa).

The HD domain occupies 66 to 273 (RLTHSLEVQQ…MEAADDISYC (208 aa)).

It belongs to the dGTPase family. Type 1 subfamily. Homotetramer. It depends on Mg(2+) as a cofactor.

It catalyses the reaction dGTP + H2O = 2'-deoxyguanosine + triphosphate + H(+). DGTPase preferentially hydrolyzes dGTP over the other canonical NTPs. This chain is Deoxyguanosinetriphosphate triphosphohydrolase, found in Yersinia enterocolitica serotype O:8 / biotype 1B (strain NCTC 13174 / 8081).